We begin with the raw amino-acid sequence, 201 residues long: Potassium-transporting ATPase KdpC subunit (201 aa).

A helical membrane pass occupies residues 10 to 30 (VVLVVLTVICGLAYPLAMTGI). A disordered region spans residues 67–105 (HGRPSATSAADPADPTKTVSSPYNAANSSGSNLGPTSKA). The segment covering 70-82 (PSATSAADPADPT) has biased composition (low complexity). Residues 83 to 105 (KTVSSPYNAANSSGSNLGPTSKA) are compositionally biased toward polar residues.

The protein belongs to the KdpC family. As to quaternary structure, the system is composed of three essential subunits: KdpA, KdpB and KdpC.

The protein localises to the cell inner membrane. Functionally, part of the high-affinity ATP-driven potassium transport (or Kdp) system, which catalyzes the hydrolysis of ATP coupled with the electrogenic transport of potassium into the cytoplasm. This subunit acts as a catalytic chaperone that increases the ATP-binding affinity of the ATP-hydrolyzing subunit KdpB by the formation of a transient KdpB/KdpC/ATP ternary complex. This chain is Potassium-transporting ATPase KdpC subunit, found in Rhodopseudomonas palustris (strain BisB5).